Reading from the N-terminus, the 469-residue chain is Ribulose bisphosphate carboxylase large chain (469 aa).

Position 8 is an N6,N6,N6-trimethyllysine (K8). Positions 117 and 167 each coordinate substrate. The Proton acceptor role is filled by K169. K171 provides a ligand contact to substrate. Mg(2+) is bound by residues K195, D197, and E198. K195 is subject to N6-carboxylysine. The active-site Proton acceptor is H288. Positions 289, 321, and 373 each coordinate substrate.

The protein belongs to the RuBisCO large chain family. Type I subfamily. In terms of assembly, heterohexadecamer of 8 large chains and 8 small chains; disulfide-linked. The disulfide link is formed within the large subunit homodimers. The cofactor is Mg(2+). Post-translationally, the disulfide bond which can form in the large chain dimeric partners within the hexadecamer appears to be associated with oxidative stress and protein turnover.

It localises to the plastid. It is found in the chloroplast. The catalysed reaction is 2 (2R)-3-phosphoglycerate + 2 H(+) = D-ribulose 1,5-bisphosphate + CO2 + H2O. It catalyses the reaction D-ribulose 1,5-bisphosphate + O2 = 2-phosphoglycolate + (2R)-3-phosphoglycerate + 2 H(+). RuBisCO catalyzes two reactions: the carboxylation of D-ribulose 1,5-bisphosphate, the primary event in carbon dioxide fixation, as well as the oxidative fragmentation of the pentose substrate in the photorespiration process. Both reactions occur simultaneously and in competition at the same active site. The protein is Ribulose bisphosphate carboxylase large chain of Persicaria senticosa (Knotweed).